Reading from the N-terminus, the 676-residue chain is Solute carrier family 26 member 10 (676 aa).

The segment at 1–24 is disordered; it reads MSGPLASGTCSDPEEVSDLKSPLS. A run of 11 helical transmembrane segments spans residues 101–121, 124–144, 149–165, 190–210, 226–246, 267–287, 300–320, 353–373, 398–418, 426–446, and 487–507; these read AVAG…FALL, VPPV…SLLG, LSTG…GSVV, VGAA…MFVL, ALTS…LLGL, ALSQ…VLLV, LLTP…LCFT, ILAD…SLAS, ISSL…SLLV, LAGL…RPFF, and IVTW…VGVV. An STAS domain is found at 539 to 660; sequence ESRKLLQVPG…VSVQDAAAHA (122 aa).

The protein belongs to the SLC26A/SulP transporter (TC 2.A.53) family.

It localises to the membrane. Functionally, chloride/bicarbonate exchanger. This Mus musculus (Mouse) protein is Solute carrier family 26 member 10 (Slc26a10).